Reading from the N-terminus, the 78-residue chain is Major outer membrane lipoprotein Lpp (78 aa).

Residues 1–19 (MKAKIVLGAVILASGLLAG) form the signal peptide. Residue Cys-20 is the site of N-palmitoyl cysteine attachment. Cys-20 carries S-diacylglycerol cysteine lipidation. 2 consecutive repeats follow at residues 25 to 35 (NAQLDQISSDV) and 39 to 49 (NTQVQQLSSDV). A coiled-coil region spans residues 28–62 (LDQISSDVNRLNTQVQQLSSDVQSANAQAKAAYEA). Lys-78 is subject to N6-murein peptidoglycan lysine.

Belongs to the Lpp family. Homotrimer.

The protein localises to the cell outer membrane. The protein resides in the secreted. Its subcellular location is the cell wall. Functionally, a highly abundant outer membrane lipoprotein that controls the distance between the inner and outer membranes. The only protein known to be covalently linked to the peptidoglycan network (PGN). Also non-covalently binds the PGN. The link between the cell outer membrane and PGN contributes to maintenance of the structural and functional integrity of the cell envelope, and maintains the correct distance between the PGN and the outer membrane. The chain is Major outer membrane lipoprotein Lpp from Proteus mirabilis.